We begin with the raw amino-acid sequence, 344 residues long: Heat-inducible transcription repressor HrcA (344 aa).

Belongs to the HrcA family.

In terms of biological role, negative regulator of class I heat shock genes (grpE-dnaK-dnaJ and groELS operons). Prevents heat-shock induction of these operons. This chain is Heat-inducible transcription repressor HrcA, found in Streptococcus pneumoniae (strain 70585).